Here is a 141-residue protein sequence, read N- to C-terminus: Mite group 2 allergen Tyr p 2 (141 aa).

The first 15 residues, 1 to 15, serve as a signal peptide directing secretion; sequence MKFLILFALVAVAAA. 3 cysteine pairs are disulfide-bonded: Cys23–Cys132, Cys36–Cys41, and Cys87–Cys92. Asn103 carries an N-linked (GlcNAc...) asparagine glycan.

The protein belongs to the NPC2 family.

Its subcellular location is the secreted. The polypeptide is Mite group 2 allergen Tyr p 2 (Tyrophagus putrescentiae (Mold mite)).